The following is a 218-amino-acid chain: MGQKINPLGFRLGTTQGHHSLWFSQPKNYSEGLQEDQKIRDCIKNYVQKNMRTSSGVEGIARIEIQKRIDLIQVIIFMGFPKLLIESRPRGIEELQMTLQKELNCVNRKLNIAVTRIAKPYGNPNILAEFIAGQLKNRVSFRKAMKKAIELTEQADTKGIQIQIAGRIDGKEIARVEWIREGRVPLQTIRAKIDYCAYTVRTIYGVLGIKIWIFLDEE.

One can recognise a KH type-2 domain in the interval 47–118; the sequence is VQKNMRTSSG…KLNIAVTRIA (72 aa).

Belongs to the universal ribosomal protein uS3 family. As to quaternary structure, part of the 30S ribosomal subunit.

Its subcellular location is the plastid. It localises to the chloroplast. The sequence is that of Small ribosomal subunit protein uS3c (rps3) from Atropa belladonna (Belladonna).